A 459-amino-acid chain; its full sequence is Vanillin aminotransferase (459 aa).

Pyridoxal 5'-phosphate contacts are provided by residues 115–116 (GS) and aspartate 255. Lysine 284 carries the post-translational modification N6-(pyridoxal phosphate)lysine. Residue 320 to 321 (FT) participates in pyridoxal 5'-phosphate binding. A coiled-coil region spans residues 428 to 459 (LSLEELDELIRIYGKALKDTEKRVEELKSQKK).

This sequence belongs to the class-III pyridoxal-phosphate-dependent aminotransferase family. Expressed in placental tissue of immature fruit.

The enzyme catalyses vanillin + L-alanine = vanillylamine + pyruvate. Involved in the biosynthesis of capsaicinoids natural products, pungent alkaloids synthesized from phenylpropanoid intermediates in the placental tissue of chili pepper fruit acting as repellant on herbivorous mammals and conferring spiciness to hot peppers. Can transfer an amine from alanine to vanillin, forming vanillylamine and pyruvate. This Capsicum frutescens (Cayenne pepper) protein is Vanillin aminotransferase.